Consider the following 341-residue polypeptide: Glyceraldehyde-3-phosphate dehydrogenase 4 (341 aa).

NAD(+)-binding positions include 13–14, D35, and K85; that span reads RI. Residues 157-159, T188, 217-218, and R240 contribute to the D-glyceraldehyde 3-phosphate site; these read SCT and TG. The Nucleophile role is filled by C158. N322 is an NAD(+) binding site.

Belongs to the glyceraldehyde-3-phosphate dehydrogenase family. Homotetramer.

It is found in the cytoplasm. It catalyses the reaction D-glyceraldehyde 3-phosphate + phosphate + NAD(+) = (2R)-3-phospho-glyceroyl phosphate + NADH + H(+). The protein operates within carbohydrate degradation; glycolysis; pyruvate from D-glyceraldehyde 3-phosphate: step 1/5. The sequence is that of Glyceraldehyde-3-phosphate dehydrogenase 4 (gpd-4) from Caenorhabditis elegans.